Reading from the N-terminus, the 160-residue chain is Lipoprotein signal peptidase (160 aa).

4 helical membrane-spanning segments follow: residues 7–27 (WFWL…YITV), 39–59 (LWPG…FSFF), 62–82 (GAVW…FLGW), and 96–116 (GFIL…GYVV). Catalysis depends on residues Asp-117 and Asp-133. A helical transmembrane segment spans residues 126–146 (FPVFNLADTFINIGIFFLLLA).

It belongs to the peptidase A8 family.

The protein localises to the cell inner membrane. The catalysed reaction is Release of signal peptides from bacterial membrane prolipoproteins. Hydrolyzes -Xaa-Yaa-Zaa-|-(S,diacylglyceryl)Cys-, in which Xaa is hydrophobic (preferably Leu), and Yaa (Ala or Ser) and Zaa (Gly or Ala) have small, neutral side chains.. The protein operates within protein modification; lipoprotein biosynthesis (signal peptide cleavage). Functionally, this protein specifically catalyzes the removal of signal peptides from prolipoproteins. In Gloeothece citriformis (strain PCC 7424) (Cyanothece sp. (strain PCC 7424)), this protein is Lipoprotein signal peptidase.